The primary structure comprises 125 residues: MIQAILVAFGGAIGSVLRYYVGQWALRLMGSAFPWGTLAVNVVGCFVIGVFAELIARKFDASVELRLLLITGFLGGFTTFSAFSLDAISLFERGEAVAGGIYIAASVGLSMAAVIAGLAVMRALA.

4 helical membrane-spanning segments follow: residues 1-21, 32-52, 68-88, and 101-121; these read MIQA…RYYV, AFPW…GVFA, LLIT…LDAI, and IYIA…LAVM. Na(+)-binding residues include glycine 75 and threonine 78.

The protein belongs to the fluoride channel Fluc/FEX (TC 1.A.43) family.

It localises to the cell inner membrane. The enzyme catalyses fluoride(in) = fluoride(out). Its activity is regulated as follows. Na(+) is not transported, but it plays an essential structural role and its presence is essential for fluoride channel function. Functionally, fluoride-specific ion channel. Important for reducing fluoride concentration in the cell, thus reducing its toxicity. The chain is Fluoride-specific ion channel FluC from Rhizobium johnstonii (strain DSM 114642 / LMG 32736 / 3841) (Rhizobium leguminosarum bv. viciae).